A 246-amino-acid chain; its full sequence is Probable transcriptional regulatory protein CTC_02215 (246 aa).

Belongs to the TACO1 family.

The protein resides in the cytoplasm. The sequence is that of Probable transcriptional regulatory protein CTC_02215 from Clostridium tetani (strain Massachusetts / E88).